Reading from the N-terminus, the 142-residue chain is Large ribosomal subunit protein uL11 (142 aa).

It belongs to the universal ribosomal protein uL11 family. Part of the ribosomal stalk of the 50S ribosomal subunit. Interacts with L10 and the large rRNA to form the base of the stalk. L10 forms an elongated spine to which L12 dimers bind in a sequential fashion forming a multimeric L10(L12)X complex. In terms of processing, one or more lysine residues are methylated.

Forms part of the ribosomal stalk which helps the ribosome interact with GTP-bound translation factors. The sequence is that of Large ribosomal subunit protein uL11 from Buchnera aphidicola subsp. Acyrthosiphon pisum (strain APS) (Acyrthosiphon pisum symbiotic bacterium).